The sequence spans 800 residues: DNA topoisomerase 4 subunit A (800 aa).

Residues 31-495 (LPDVRDGLKP…EIEEIKIDKE (465 aa)) enclose the Topo IIA-type catalytic domain. Tyr-119 (O-(5'-phospho-DNA)-tyrosine intermediate) is an active-site residue.

It belongs to the type II topoisomerase GyrA/ParC subunit family. ParC type 2 subfamily. As to quaternary structure, heterotetramer composed of ParC and ParE.

The protein localises to the cell membrane. It catalyses the reaction ATP-dependent breakage, passage and rejoining of double-stranded DNA.. Topoisomerase IV is essential for chromosome segregation. It relaxes supercoiled DNA. Performs the decatenation events required during the replication of a circular DNA molecule. This chain is DNA topoisomerase 4 subunit A, found in Staphylococcus aureus (strain MW2).